Here is a 711-residue protein sequence, read N- to C-terminus: Zinc finger protein 175 (711 aa).

The span at 1 to 11 (MPADVNLSQKP) shows a compositional bias: polar residues. The tract at residues 1–21 (MPADVNLSQKPQVLGPEKQDG) is disordered. Residues 27–98 (VSFEDVTVDF…EAEVSHQRCQ (72 aa)) enclose the KRAB domain. The segment at 279-301 (DGCSECGGSFTQKSHLFAQQRIH) adopts a C2H2-type 1; atypical zinc-finger fold. A C2H2-type 2; atypical zinc finger spans residues 307-329 (HECGKCGKAFMPQLKLSVYLTDH). A C2H2-type 3 zinc finger spans residues 335 to 357 (CICKECGKVFIQRSELLTHQKTH). A Nuclear localization signal motif is present at residues 359 to 362 (RKKP). C2H2-type zinc fingers lie at residues 363 to 385 (YKCH…QRTH), 391 to 413 (YECS…QKIH), 419 to 441 (YACS…QRIH), 447 to 469 (YVCI…QRSH), 475 to 497 (YQCH…HRIH), 503 to 525 (YECS…QKIH), 531 to 553 (HVCS…QRIH), 559 to 581 (YKCS…QRIH), 587 to 609 (YVCT…QITH), 615 to 637 (FVCY…QRTH), 643 to 665 (YECL…QRIH), and 671 to 693 (YVCS…QTTH).

This sequence belongs to the krueppel C2H2-type zinc-finger protein family. Ubiquitous.

It localises to the cytoplasm. Its subcellular location is the nucleus. Functionally, down-regulates the expression of several chemokine receptors. Interferes with HIV-1 replication by suppressing Tat-induced viral LTR promoter activity. This chain is Zinc finger protein 175 (ZNF175), found in Homo sapiens (Human).